Reading from the N-terminus, the 32-residue chain is Photosystem I reaction center subunit XII (32 aa).

The chain crosses the membrane as a helical span at residues 4–26 (ISDSQIIVILLSVFITSILALRL).

It belongs to the PsaM family.

Its subcellular location is the plastid. The protein localises to the chloroplast thylakoid membrane. The polypeptide is Photosystem I reaction center subunit XII (Marchantia polymorpha (Common liverwort)).